A 254-amino-acid polypeptide reads, in one-letter code: Vitamin B12 import ATP-binding protein BtuD (254 aa).

In terms of domain architecture, ABC transporter spans 1–239; sequence MHINHISVGN…ENLQQVFETP (239 aa). 29-36 lines the ATP pocket; the sequence is GPNGSGKS.

This sequence belongs to the ABC transporter superfamily. Vitamin B12 importer (TC 3.A.1.13.1) family. In terms of assembly, the complex is composed of two ATP-binding proteins (BtuD), two transmembrane proteins (BtuC) and a solute-binding protein (BtuF).

It localises to the cell inner membrane. It carries out the reaction an R-cob(III)alamin(out) + ATP + H2O = an R-cob(III)alamin(in) + ADP + phosphate + H(+). Its function is as follows. Part of the ABC transporter complex BtuCDF involved in vitamin B12 import. Responsible for energy coupling to the transport system. The protein is Vitamin B12 import ATP-binding protein BtuD of Vibrio vulnificus (strain YJ016).